Here is a 457-residue protein sequence, read N- to C-terminus: Cyclic dof factor 2 (457 aa).

The tract at residues 1–130 is disordered; it reads MADPAIKLFG…GGTACSQEGK (130 aa). The span at 22–35 shows a compositional bias: polar residues; it reads DSSSSYTGFLTETQ. Acidic residues-rich tracts occupy residues 45–54 and 62–73; these read TGDDDDEEMG and EGDDVGDGGGES. Basic and acidic residues-rich tracts occupy residues 74–94 and 106–118; these read ETDK…RNES and EKTE…KTNE. Residues 138 to 192 form a Dof-type zinc finger; sequence LPCPRCNSMETKFCYYNNYNVNQPRHFCKKCQRYWTAGGTMRNVPVGAGRRKNKS. Zn(2+) is bound by residues cysteine 140, cysteine 143, cysteine 165, and cysteine 168. Disordered stretches follow at residues 334-377 and 417-457; these read QPNS…KSKP and AFRS…HESS. Residues 337 to 346 are compositionally biased toward low complexity; that stretch reads SPSGSNPNSP.

As to quaternary structure, interacts with ADO2 (via kelch repeats) and ADO3 (via kelch repeats). In terms of tissue distribution, expressed in the vasculature of cotyledons and hypocotyls, leaves and roots.

The protein localises to the nucleus. In terms of biological role, transcription factor that binds specifically to a 5'-AA[AG]G-3' consensus core sequence. Regulates a photoperiodic flowering response. Transcriptional repressor of 'CONSTANS' expression. The stability of CDF2 is controlled by 'GIGANTEA' and redundantly by ADO3, ADO2 and/or ADO1. The chain is Cyclic dof factor 2 (CDF2) from Arabidopsis thaliana (Mouse-ear cress).